Reading from the N-terminus, the 244-residue chain is U11/U12 small nuclear ribonucleoprotein 35 kDa protein (244 aa).

The 79-residue stretch at 51 to 129 (LTLFVARLNL…HEIFVDYELE (79 aa)) folds into the RRM domain. Basic and acidic residues predominate over residues 146 to 162 (GKKESGQLRFGGRDRPF). Residues 146–244 (GKKESGQLRF…KSRDKRDRSK (99 aa)) form a disordered region. Residue lysine 172 forms a Glycyl lysine isopeptide (Lys-Gly) (interchain with G-Cter in SUMO2) linkage. Composition is skewed to basic and acidic residues over residues 173–185 (NEPH…ERRE) and 192–244 (RHWD…DRSK).

In terms of assembly, component of the U11/U12 snRNPs that are part of the U12-type spliceosome.

Its subcellular location is the nucleus. The chain is U11/U12 small nuclear ribonucleoprotein 35 kDa protein (Snrnp35) from Mus musculus (Mouse).